Consider the following 331-residue polypeptide: Aspartate carbamoyltransferase catalytic subunit (331 aa).

Positions 66 and 67 each coordinate carbamoyl phosphate. Position 94 (Lys94) interacts with L-aspartate. The carbamoyl phosphate site is built by Arg116, His149, and Gln152. 2 residues coordinate L-aspartate: Arg189 and Arg243. Gly284 and Pro285 together coordinate carbamoyl phosphate.

Belongs to the aspartate/ornithine carbamoyltransferase superfamily. ATCase family. Heterododecamer (2C3:3R2) of six catalytic PyrB chains organized as two trimers (C3), and six regulatory PyrI chains organized as three dimers (R2).

The catalysed reaction is carbamoyl phosphate + L-aspartate = N-carbamoyl-L-aspartate + phosphate + H(+). It participates in pyrimidine metabolism; UMP biosynthesis via de novo pathway; (S)-dihydroorotate from bicarbonate: step 2/3. Catalyzes the condensation of carbamoyl phosphate and aspartate to form carbamoyl aspartate and inorganic phosphate, the committed step in the de novo pyrimidine nucleotide biosynthesis pathway. The protein is Aspartate carbamoyltransferase catalytic subunit of Thermosynechococcus vestitus (strain NIES-2133 / IAM M-273 / BP-1).